Here is a 669-residue protein sequence, read N- to C-terminus: L-type lectin-domain containing receptor kinase V.9 (669 aa).

Positions 1–21 are cleaved as a signal peptide; that stretch reads MKFFVLVLLLVLQFFSNKALS. The Extracellular segment spans residues 22–286; that stretch reads QSEEGEFGFN…RDSRSTSVKK (265 aa). The interval 38 to 259 is legume-lectin like; sequence SGIAITNSKG…SHYILGWTFK (222 aa). N-linked (GlcNAc...) asparagine glycosylation is found at asparagine 53, asparagine 75, asparagine 124, asparagine 206, and asparagine 261. A helical membrane pass occupies residues 287–307; it reads ILAISLSLTSLAILVFLTISY. The Cytoplasmic segment spans residues 308–669; it reads MLFLKRKKLM…FTEPFVSHGR (362 aa). In terms of domain architecture, Protein kinase spans 344-603; that stretch reads FRNSELLGKG…LGLFCSHPVA (260 aa). ATP-binding positions include 350–358 and lysine 373; that span reads LGKGGFGKV. The active-site Proton acceptor is aspartate 469.

In the C-terminal section; belongs to the protein kinase superfamily. Ser/Thr protein kinase family. The protein in the N-terminal section; belongs to the leguminous lectin family.

It is found in the cell membrane. The catalysed reaction is L-seryl-[protein] + ATP = O-phospho-L-seryl-[protein] + ADP + H(+). It catalyses the reaction L-threonyl-[protein] + ATP = O-phospho-L-threonyl-[protein] + ADP + H(+). This chain is L-type lectin-domain containing receptor kinase V.9 (LECRK59), found in Arabidopsis thaliana (Mouse-ear cress).